A 257-amino-acid chain; its full sequence is Probable oxidoreductase yanE (257 aa).

The protein belongs to the oxidoreductase OpS7 family.

The protein operates within secondary metabolite biosynthesis; terpenoid biosynthesis. Its function is as follows. Part of the gene cluster that mediates the biosynthesis of yanuthone D, a fungal isoprenoid epoxycyclohexenone that acts as an antibiotic against fungi and bacteria. The first step of the pathway is the synthesis of 6-methylsalicylic acid (6-MSA) by the polyketide synthase yanA. 6-MSA is then converted to m-cresol by the decarboxylase yanB. The cytochrome P450 monooxygenase yanC then catalyzes the oxidation of m-cresol to toluquinol. Epoxidation of toluquinol is then performed by the short chain dehydrogenase yanD, with the help of yanE, and a further prenylation by yanG leads to 7-deacetoxyyanuthone A. The next step is the hydroxylation of C-22 of 7-deacetoxyyanuthone A by the cytochrome P450 monooxygenase yanH to yield 22-deacetylyanuthone A. O-Mevalon transferase yanI then attaches mevalon to the hydroxyl group of 22-deacetylyanuthone A to produce yanuthone E. Finally, the FAD-dependent monooxygenase yanF oxidizes the hydroxyl group at C15 of yanuthone E to form yanuthone D. Furthermore, several branching points in the pathway lead to the production of yanuthones F and G from 7-deacetoxyyanuthone A; yanuthones H and I from 22-deacetylyanuthone A; and yanuthone J from yanuthone E. YanE is also involved in the synthesis of yanuthone X1 which does not have 6-methylsalicylic acid (6-MSA) as precursor. The chain is Probable oxidoreductase yanE from Aspergillus niger (strain ATCC 1015 / CBS 113.46 / FGSC A1144 / LSHB Ac4 / NCTC 3858a / NRRL 328 / USDA 3528.7).